The primary structure comprises 298 residues: MMAIATKRRGVAAVMSLGVATMTAVPALAQDVLGDLPVIGKPVNGGMNFQPASSPLAHDQQWLDHFVLYIITAVTIFVCLLLLICIVRFNRRANPVPARFTHNTPIEVIWTLVPVLILVAIGAFSLPILFRSQEMPNDPDLVIKAIGHQWYWSYEYPNDGVAFDALMLEKEALADAGYSEDEYLLATDNPVVVPVGKKVLVQVTATDVIHAWTIPAFAVKQDAVPGRIAQLWFSVDQEGVYFGQCSELCGINHAYMPIVVKAVSQEKYEAWLAGAKEEFAADASDYLPASPVKLASAE.

Residues 1 to 29 (MMAIATKRRGVAAVMSLGVATMTAVPALA) form the signal peptide. A Pyrrolidone carboxylic acid modification is found at glutamine 30. At 30 to 55 (QDVLGDLPVIGKPVNGGMNFQPASSP) the chain is on the periplasmic side. The helical transmembrane segment at 56–88 (LAHDQQWLDHFVLYIITAVTIFVCLLLLICIVR) threads the bilayer. Residues 89-103 (FNRRANPVPARFTHN) are Cytoplasmic-facing. The chain crosses the membrane as a helical span at residues 104–134 (TPIEVIWTLVPVLILVAIGAFSLPILFRSQE). The Periplasmic portion of the chain corresponds to 135-280 (MPNDPDLVIK…WLAGAKEEFA (146 aa)). The Cu cation site is built by histidine 210, cysteine 245, glutamate 247, cysteine 249, histidine 253, and methionine 256. A propeptide spans 281 to 298 (ADASDYLPASPVKLASAE) (C-terminal propeptide).

The protein belongs to the cytochrome c oxidase subunit 2 family. The cofactor is binuclear copper center (CuA).

It localises to the cell inner membrane. The enzyme catalyses 4 Fe(II)-[cytochrome c] + O2 + 8 H(+)(in) = 4 Fe(III)-[cytochrome c] + 2 H2O + 4 H(+)(out). Functionally, subunits I and II form the functional core of the enzyme complex. Electrons originating in cytochrome c are transferred via heme a and Cu(A) to the binuclear center formed by heme a3 and Cu(B). This Paracoccus denitrificans protein is Cytochrome c oxidase subunit 2 (ctaC).